Consider the following 327-residue polypeptide: Phenylalanine--tRNA ligase alpha subunit (327 aa).

E252 is a binding site for Mg(2+).

Belongs to the class-II aminoacyl-tRNA synthetase family. Phe-tRNA synthetase alpha subunit type 1 subfamily. Tetramer of two alpha and two beta subunits. Mg(2+) is required as a cofactor.

The protein resides in the cytoplasm. It carries out the reaction tRNA(Phe) + L-phenylalanine + ATP = L-phenylalanyl-tRNA(Phe) + AMP + diphosphate + H(+). The protein is Phenylalanine--tRNA ligase alpha subunit of Tolumonas auensis (strain DSM 9187 / NBRC 110442 / TA 4).